Here is a 558-residue protein sequence, read N- to C-terminus: Armadillo repeat-containing X-linked protein 5 (558 aa).

2 stretches are compositionally biased toward basic and acidic residues: residues 1 to 14 (MVDS…RGKA) and 139 to 156 (KSHD…REEA). 2 disordered regions span residues 1–34 (MVDS…NGKT) and 139–163 (KSHD…MKSS). 4 ARM repeats span residues 300–339 (CKSR…GISP), 422–461 (VKFE…CLSK), 463–503 (HANT…NINF), and 520–558 (SELI…ILKL).

Belongs to the eutherian X-chromosome-specific Armcx family.

In Pongo abelii (Sumatran orangutan), this protein is Armadillo repeat-containing X-linked protein 5 (ARMCX5).